The chain runs to 506 residues: TOM1-like protein 3 (506 aa).

One can recognise a VHS domain in the interval 12 to 141 (ATNDMLIGPD…ELRSAGIEFP (130 aa)). A GAT domain is found at 180–268 (DASALSMEEI…VLQHHDDKAK (89 aa)). Disordered stretches follow at residues 266 to 328 (KAKG…PPSS), 351 to 384 (ETFE…SKSP), and 398 to 477 (EQLP…PEDI). The span at 288 to 298 (DDDDDESDDDF) shows a compositional bias: acidic residues. Serine 294 bears the Phosphoserine mark. Residues 358 to 368 (PPSTSQSSNHD) are compositionally biased toward polar residues. Serine 383 carries the post-translational modification Phosphoserine. The segment covering 450-460 (QSRNLSLNPTA) has biased composition (polar residues). Residues 468-477 (PKKDDKPEDI) are compositionally biased toward basic and acidic residues.

This sequence belongs to the TOM1 family. In terms of tissue distribution, preferentially expressed in cauline leaves.

The protein resides in the membrane. In terms of biological role, might contribute to the loading of the ESCRT machinery. This Arabidopsis thaliana (Mouse-ear cress) protein is TOM1-like protein 3.